Here is a 220-residue protein sequence, read N- to C-terminus: Apoptosis regulator BALF1 (220 aa).

This sequence belongs to the Epstein-Barr virus BALF1 family. In terms of assembly, interacts with BHRF1; this interaction modulates BHRF1 activity. Interacts with host BAX and BAK1.

It is found in the host cytoplasm. In terms of biological role, modulates the antiapoptotic activity of the viral protein BHRF1. May also play an active part in oncogenesis in Burkitt's lymphomy and nasopharyngeal carcinoma. This Homo sapiens (Human) protein is Apoptosis regulator BALF1.